Here is a 382-residue protein sequence, read N- to C-terminus: Bifunctional enzyme IspD/IspF (382 aa).

The interval 1-226 (MTLAVLIVAA…RSTMDNIPDI (226 aa)) is 2-C-methyl-D-erythritol 4-phosphate cytidylyltransferase. The segment at 227 to 382 (RLGNGYDVHR…ALATATLVRA (156 aa)) is 2-C-methyl-D-erythritol 2,4-cyclodiphosphate synthase. Positions 233 and 235 each coordinate a divalent metal cation. Residues 233–235 (DVH) and 259–260 (HS) each bind 4-CDP-2-C-methyl-D-erythritol 2-phosphate. H267 provides a ligand contact to a divalent metal cation. Residues 281-283 (DIG), 357-360 (TTSE), F364, and R367 each bind 4-CDP-2-C-methyl-D-erythritol 2-phosphate.

The protein in the N-terminal section; belongs to the IspD/TarI cytidylyltransferase family. IspD subfamily. This sequence in the C-terminal section; belongs to the IspF family. Requires a divalent metal cation as cofactor.

It carries out the reaction 2-C-methyl-D-erythritol 4-phosphate + CTP + H(+) = 4-CDP-2-C-methyl-D-erythritol + diphosphate. The enzyme catalyses 4-CDP-2-C-methyl-D-erythritol 2-phosphate = 2-C-methyl-D-erythritol 2,4-cyclic diphosphate + CMP. The protein operates within isoprenoid biosynthesis; isopentenyl diphosphate biosynthesis via DXP pathway; isopentenyl diphosphate from 1-deoxy-D-xylulose 5-phosphate: step 2/6. It functions in the pathway isoprenoid biosynthesis; isopentenyl diphosphate biosynthesis via DXP pathway; isopentenyl diphosphate from 1-deoxy-D-xylulose 5-phosphate: step 4/6. In terms of biological role, bifunctional enzyme that catalyzes the formation of 4-diphosphocytidyl-2-C-methyl-D-erythritol from CTP and 2-C-methyl-D-erythritol 4-phosphate (MEP) (IspD), and catalyzes the conversion of 4-diphosphocytidyl-2-C-methyl-D-erythritol 2-phosphate (CDP-ME2P) to 2-C-methyl-D-erythritol 2,4-cyclodiphosphate (ME-CPP) with a corresponding release of cytidine 5-monophosphate (CMP) (IspF). In Ruegeria sp. (strain TM1040) (Silicibacter sp.), this protein is Bifunctional enzyme IspD/IspF.